Consider the following 212-residue polypeptide: uncharacterized protein (212 aa).

The region spanning 105–187 (NTIYLVEGDF…QVKVVQLKGK (83 aa)) is the Toprim domain.

This is an uncharacterized protein from Mycoplasma pneumoniae (strain ATCC 29342 / M129 / Subtype 1) (Mycoplasmoides pneumoniae).